The sequence spans 213 residues: Thymidylate kinase (213 aa).

Residue 10 to 17 (GLEGAGKT) participates in ATP binding.

Belongs to the thymidylate kinase family.

It catalyses the reaction dTMP + ATP = dTDP + ADP. Functionally, phosphorylation of dTMP to form dTDP in both de novo and salvage pathways of dTTP synthesis. This is Thymidylate kinase from Klebsiella pneumoniae (strain 342).